Here is a 315-residue protein sequence, read N- to C-terminus: 1-aminocyclopropane-1-carboxylate oxidase 1 (315 aa).

In terms of domain architecture, Fe2OG dioxygenase spans 153–253 (PNFGTKVSNY…RMSLASFYNP (101 aa)). Residues histidine 177, aspartate 179, and histidine 234 each coordinate Fe cation.

Belongs to the iron/ascorbate-dependent oxidoreductase family. Requires Fe cation as cofactor. In terms of tissue distribution, predominantly expressed in the petals and the stigma and style.

The enzyme catalyses 1-aminocyclopropane-1-carboxylate + L-ascorbate + O2 = ethene + L-dehydroascorbate + hydrogen cyanide + CO2 + 2 H2O. It functions in the pathway alkene biosynthesis; ethylene biosynthesis via S-adenosyl-L-methionine; ethylene from S-adenosyl-L-methionine: step 2/2. This Solanum lycopersicum (Tomato) protein is 1-aminocyclopropane-1-carboxylate oxidase 1 (ACO1).